The following is a 377-amino-acid chain: Iris (377 aa).

2 N-linked (GlcNAc...) asparagine glycosylation sites follow: Asn-11 and Asn-226.

This sequence belongs to the serpin family. Female saliva (at protein level). Female salivary gland (at protein level).

It localises to the secreted. Its function is as follows. Serine protease inhibitor with anticoagulant and immunosuppressive properties that can modulate blood feeding of ticks on vertebrate species. Strongly inhibits human leukocyte elastase (ELANE) and porcine pancreatic elastase. Moderately inhibits human tPA/tissue-type plasminogen activator (PLAT), coagulation factor Xa (F10), thrombin (F2) and trypsin. Does not inhibit human plasmin (PLG). Inhibits platelet aggregation. Inhibits the intrinsic pathway of blood coagulation in the host. Inhibits fibrinolysis in the host. Inhibits proliferation of mouse splenocytes. Decreases the number of IFN-gamma (IFNG)-producing human peripheral blood mononuclear cells (PBMCs) after stimulation with phytohemagglutinin A (PHA). Increases the number of IL10-producing human PBMCs after stimulation with lipopolysaccharides (LPS) with no significant effect on IL10 production. Inhibits production of IFNG, IL6, TNF-alpha (TNF) and CXCL8 by human PBMCs. Binds to monocyte/macrophage subpopulation of the host PBMCs. Increases both survival rate and survival time in mice with LPS-induced endotoxemic shock. The sequence is that of Iris from Ixodes ricinus (Common tick).